Here is a 195-residue protein sequence, read N- to C-terminus: Molybdenum cofactor guanylyltransferase (195 aa).

GTP-binding positions include 12–14, Lys25, Asn53, Asp70, and Asp100; that span reads LAG. Asp100 is a Mg(2+) binding site.

This sequence belongs to the MobA family. Monomer. Mg(2+) serves as cofactor.

It localises to the cytoplasm. The enzyme catalyses Mo-molybdopterin + GTP + H(+) = Mo-molybdopterin guanine dinucleotide + diphosphate. In terms of biological role, transfers a GMP moiety from GTP to Mo-molybdopterin (Mo-MPT) cofactor (Moco or molybdenum cofactor) to form Mo-molybdopterin guanine dinucleotide (Mo-MGD) cofactor. The protein is Molybdenum cofactor guanylyltransferase of Vibrio parahaemolyticus serotype O3:K6 (strain RIMD 2210633).